The primary structure comprises 1219 residues: MMNAIPVKPTGTRWTDNQWKSIYAKGQDILVAAAAGSGKTAVLVERIIQRIIRDEIDVDKLLVVTFTNASAREMKQRVDQRIQEASIENPDNAHLKNQRVKIHQAQISTLHSFCLKLIQQHYDVLDIDPNFRTSSEAENILLLEQTIDEVLERHYDILDPHFIDLTEQLSSDRNDDQLRNTIKEMYYFSVANPNPLNWLQHLSTPYEDESQQETLFNLLNDLAMIFMNSALEALNKSYDLFMMLEEVDKQVAVLDKERRFLAEAMEGGLLNTQKIAEHQFESRFPAKNKKIKEANEMMIDAYDDGKKHYDDYKALVSKVQEDYFSREAADLKTDMQRLAPRVAYLAQVTADVIEQFNQKKRSRNLLDFSDYEHFALRILMDSNGNPSEIADMYRKQFEEILVDEYQDTNRVQEKIIACIKRGDEADGNLFMVGDVKQSIYKFRQADPSLFIGKYNRFTLDGSEHGMRIDLSQNFRSREEVLTTTNYLFKHMMDEAVGEIVYDDAAQLYYGAPFDHKPHDVQLNMLIEDASSDLNGSEQEAEYIVQQVEKIMSQHEIYDIKTEQYRKPSYKDIVILERSYGQARKIQQAFKDHNIPFHVNSKEGYFEQTEVQLILSFLRTIDNPLQDIYLVGLMRSVIYQFTEDELSNIRVFSPNDDYFYQSIKHYMANDVANKKLVAKLASFLEDIEQYQDYSQSHPVYQLIDKFYNDHYVIQYFSGIIGGKGRRANLYGLFNKAVEFENSSFRGLYQFIRFIDELIERGKDFGEENIVGPNDDVVRMMTIHSSKGLEFPFVIYSGLSRKFRRDDLHRPVILNQSYGLGMAYYDVESNLSYPSLSSVTYKAIAEKEMVSEEMRLIYVALTRAKEQLFLIGRVKDEKTLSQFEQVSVSESHLPVSYRITAQRPIDMIYPILAKYQSSSLPNELRFEQTIEDVDQAMRPYVQLNTDFYEDIASETVTDVSEQRTVADIEMNHSKNEALQAQIHNQLSYEYPYQSAIEKPSKQSVSELKRQHETEQSDTNYDRVRQYRIGSTSYERPAFLSRSKQRKANEIGTLMHTVMQHLPFNKDRLTEEDVNRLVDHLIAQHIIPEDAKQDIRFDDIYNFIASDLYQLIAESDEIYRELPFVVNQNEVDHNKHSEEDASIIQGMIDLIFVKEGQYYFVDYKTDAFNRRRNMSDEEIGAQLRERYKVQMNHYRNTLETILKTDVKGFLYFFKFGQLSIEG.

Residues 12–477 (TRWTDNQWKS…IDLSQNFRSR (466 aa)) enclose the UvrD-like helicase ATP-binding domain. Position 33–40 (33–40 (AAAGSGKT)) interacts with ATP. The 309-residue stretch at 478–786 (EEVLTTTNYL…RMMTIHSSKG (309 aa)) folds into the UvrD-like helicase C-terminal domain. Residues 997 to 1016 (PSKQSVSELKRQHETEQSDT) are disordered. The span at 1004–1016 (ELKRQHETEQSDT) shows a compositional bias: basic and acidic residues.

Belongs to the helicase family. AddA subfamily. In terms of assembly, heterodimer of AddA and AddB/RexB. Requires Mg(2+) as cofactor.

The catalysed reaction is Couples ATP hydrolysis with the unwinding of duplex DNA by translocating in the 3'-5' direction.. It catalyses the reaction ATP + H2O = ADP + phosphate + H(+). In terms of biological role, the heterodimer acts as both an ATP-dependent DNA helicase and an ATP-dependent, dual-direction single-stranded exonuclease. Recognizes the chi site generating a DNA molecule suitable for the initiation of homologous recombination. The AddA nuclease domain is required for chi fragment generation; this subunit has the helicase and 3' -&gt; 5' nuclease activities. The chain is ATP-dependent helicase/nuclease subunit A from Staphylococcus saprophyticus subsp. saprophyticus (strain ATCC 15305 / DSM 20229 / NCIMB 8711 / NCTC 7292 / S-41).